Consider the following 193-residue polypeptide: AP-3 complex subunit sigma-2 (193 aa).

This sequence belongs to the adaptor complexes small subunit family. As to quaternary structure, adaptor protein complex 3 (AP-3) is a heterotetramer composed of two large adaptins (delta-type subunit AP3D1 and beta-type subunit AP3B1 or AP3B2), a medium adaptin (mu-type subunit AP3M1 or AP3M2) and a small adaptin (sigma-type subunit APS1 or AP3S2). Interacts with AGAP1. AP-3 associates with the BLOC-1 complex.

It is found in the golgi apparatus. The protein localises to the cytoplasmic vesicle membrane. In terms of biological role, part of the AP-3 complex, an adaptor-related complex which is not clathrin-associated. The complex is associated with the Golgi region as well as more peripheral structures. It facilitates the budding of vesicles from the Golgi membrane and may be directly involved in trafficking to lysosomes. In concert with the BLOC-1 complex, AP-3 is required to target cargos into vesicles assembled at cell bodies for delivery into neurites and nerve terminals. This chain is AP-3 complex subunit sigma-2 (AP3S2), found in Bos taurus (Bovine).